Here is a 132-residue protein sequence, read N- to C-terminus: Small ribosomal subunit protein uS8 (132 aa).

This sequence belongs to the universal ribosomal protein uS8 family. In terms of assembly, part of the 30S ribosomal subunit. Contacts proteins S5 and S12.

One of the primary rRNA binding proteins, it binds directly to 16S rRNA central domain where it helps coordinate assembly of the platform of the 30S subunit. The chain is Small ribosomal subunit protein uS8 from Acetivibrio thermocellus (strain ATCC 27405 / DSM 1237 / JCM 9322 / NBRC 103400 / NCIMB 10682 / NRRL B-4536 / VPI 7372) (Clostridium thermocellum).